A 435-amino-acid chain; its full sequence is MKTTYVNATIVTMNEQNEVIENGYIIVENDQIIDVKSGEFANDFEVDEVIDMKGKWVLPGLVNTHTHVVMSLLRGIGDDMLLQPWLETRIWPLESQFTPELAVASTELGLLEMVKSGTTSFSDMFNPIGVDQDAIMETVSRSGMRAAVSRTLFSFGTKDDEKKAIEEAEKYVKRYYNESDMLTTMVAPHSPYTCSTELLEECARIAVENQTMVHIHLSETEREVRDIEAQYGKRPVEYAASCGLFKRPTVIAHGVVLNDDERAFLAEHDVRVAHNPNSNLKLGSGIANVKAMLEAGIKVGIATDSVASNNNLDMFEEMRIATLLQKGIHQDATALPVETALSLATKGAAEVIGMKQTGSLEAGKCADFITIDPSNKPHLQPADEVLSHLVYAASGKDISDVIINGKHVVWNGECKTLDEERIIFEASRYKRGLQR.

Zn(2+) is bound by residues His65 and His67. Substrate-binding residues include Glu94, Arg150, and His189. His216 is a Zn(2+) binding site. The substrate site is built by Glu219 and Asp304. Zn(2+) is bound at residue Asp304.

This sequence belongs to the metallo-dependent hydrolases superfamily. MTA/SAH deaminase family. Zn(2+) serves as cofactor.

It carries out the reaction S-adenosyl-L-homocysteine + H2O + H(+) = S-inosyl-L-homocysteine + NH4(+). It catalyses the reaction S-methyl-5'-thioadenosine + H2O + H(+) = S-methyl-5'-thioinosine + NH4(+). Functionally, catalyzes the deamination of 5-methylthioadenosine and S-adenosyl-L-homocysteine into 5-methylthioinosine and S-inosyl-L-homocysteine, respectively. Is also able to deaminate adenosine. This is 5-methylthioadenosine/S-adenosylhomocysteine deaminase from Bacillus cereus (strain ATCC 14579 / DSM 31 / CCUG 7414 / JCM 2152 / NBRC 15305 / NCIMB 9373 / NCTC 2599 / NRRL B-3711).